The primary structure comprises 218 residues: Pyridoxine/pyridoxamine 5'-phosphate oxidase (218 aa).

Substrate contacts are provided by residues arginine 11–tyrosine 14 and lysine 75. FMN is bound by residues arginine 70 to lysine 75, tyrosine 85 to threonine 86, lysine 92, and glutamine 114. Residues tyrosine 132, arginine 136, and serine 140 each contribute to the substrate site. FMN-binding positions include glutamine 149–serine 150 and tryptophan 195. Arginine 201 to histidine 203 serves as a coordination point for substrate. Arginine 205 provides a ligand contact to FMN.

The protein belongs to the pyridoxamine 5'-phosphate oxidase family. As to quaternary structure, homodimer. FMN is required as a cofactor.

The enzyme catalyses pyridoxamine 5'-phosphate + O2 + H2O = pyridoxal 5'-phosphate + H2O2 + NH4(+). It carries out the reaction pyridoxine 5'-phosphate + O2 = pyridoxal 5'-phosphate + H2O2. The protein operates within cofactor metabolism; pyridoxal 5'-phosphate salvage; pyridoxal 5'-phosphate from pyridoxamine 5'-phosphate: step 1/1. Its pathway is cofactor metabolism; pyridoxal 5'-phosphate salvage; pyridoxal 5'-phosphate from pyridoxine 5'-phosphate: step 1/1. Functionally, catalyzes the oxidation of either pyridoxine 5'-phosphate (PNP) or pyridoxamine 5'-phosphate (PMP) into pyridoxal 5'-phosphate (PLP). The sequence is that of Pyridoxine/pyridoxamine 5'-phosphate oxidase from Mycolicibacterium gilvum (strain PYR-GCK) (Mycobacterium gilvum (strain PYR-GCK)).